Consider the following 110-residue polypeptide: Large ribosomal subunit protein uL22 (110 aa).

The protein belongs to the universal ribosomal protein uL22 family. In terms of assembly, part of the 50S ribosomal subunit.

Its function is as follows. This protein binds specifically to 23S rRNA; its binding is stimulated by other ribosomal proteins, e.g. L4, L17, and L20. It is important during the early stages of 50S assembly. It makes multiple contacts with different domains of the 23S rRNA in the assembled 50S subunit and ribosome. In terms of biological role, the globular domain of the protein is located near the polypeptide exit tunnel on the outside of the subunit, while an extended beta-hairpin is found that lines the wall of the exit tunnel in the center of the 70S ribosome. The polypeptide is Large ribosomal subunit protein uL22 (Halorhodospira halophila (strain DSM 244 / SL1) (Ectothiorhodospira halophila (strain DSM 244 / SL1))).